The following is a 154-amino-acid chain: Aspartate carbamoyltransferase regulatory chain (154 aa).

Cysteine 109, cysteine 114, cysteine 138, and cysteine 141 together coordinate Zn(2+).

Belongs to the PyrI family. Contains catalytic and regulatory chains. The cofactor is Zn(2+).

Its function is as follows. Involved in allosteric regulation of aspartate carbamoyltransferase. This is Aspartate carbamoyltransferase regulatory chain from Photobacterium profundum (strain SS9).